Consider the following 517-residue polypeptide: Crotonobetaine/carnitine--CoA ligase (517 aa).

The protein belongs to the ATP-dependent AMP-binding enzyme family.

The catalysed reaction is 4-(trimethylamino)butanoate + ATP + CoA = 4-(trimethylamino)butanoyl-CoA + AMP + diphosphate. It catalyses the reaction crotonobetaine + ATP + CoA = crotonobetainyl-CoA + AMP + diphosphate. It carries out the reaction (R)-carnitine + ATP + CoA = (R)-carnitinyl-CoA + AMP + diphosphate. It participates in amine and polyamine metabolism; carnitine metabolism. In terms of biological role, catalyzes the transfer of CoA to carnitine, generating the initial carnitinyl-CoA needed for the CaiB reaction cycle. Also has activity toward crotonobetaine and gamma-butyrobetaine. This is Crotonobetaine/carnitine--CoA ligase from Escherichia coli O6:K15:H31 (strain 536 / UPEC).